Reading from the N-terminus, the 802-residue chain is Phenylalanine--tRNA ligase beta subunit (802 aa).

Residues 39–154 (AEGLSKLVVG…EDAVPGDSIF (116 aa)) form the tRNA-binding domain. The B5 domain occupies 407–482 (TEPVQVSTSL…RIYGYEKLPT (76 aa)). 4 residues coordinate Mg(2+): Asp-460, Asp-466, Glu-469, and Glu-470. Positions 709–802 (TKFPAVSRDI…LTEKVEAEVR (94 aa)) constitute an FDX-ACB domain.

It belongs to the phenylalanyl-tRNA synthetase beta subunit family. Type 1 subfamily. As to quaternary structure, tetramer of two alpha and two beta subunits. Mg(2+) serves as cofactor.

The protein resides in the cytoplasm. The enzyme catalyses tRNA(Phe) + L-phenylalanine + ATP = L-phenylalanyl-tRNA(Phe) + AMP + diphosphate + H(+). The polypeptide is Phenylalanine--tRNA ligase beta subunit (Streptococcus thermophilus (strain CNRZ 1066)).